The chain runs to 364 residues: Geranylgeranyl pyrophosphate synthase janG (364 aa).

Lys-83, Arg-86, and His-115 together coordinate isopentenyl diphosphate. Mg(2+)-binding residues include Asp-122 and Asp-126. Arg-131 contacts dimethylallyl diphosphate. Isopentenyl diphosphate is bound at residue Arg-132. Residues Lys-209, Thr-210, and Gln-243 each contribute to the dimethylallyl diphosphate site. Asp-246 serves as a coordination point for Mg(2+). The dimethylallyl diphosphate site is built by Asn-250, Lys-260, and Lys-270.

This sequence belongs to the FPP/GGPP synthase family. Mg(2+) is required as a cofactor.

The enzyme catalyses isopentenyl diphosphate + dimethylallyl diphosphate = (2E)-geranyl diphosphate + diphosphate. It catalyses the reaction isopentenyl diphosphate + (2E)-geranyl diphosphate = (2E,6E)-farnesyl diphosphate + diphosphate. The catalysed reaction is isopentenyl diphosphate + (2E,6E)-farnesyl diphosphate = (2E,6E,10E)-geranylgeranyl diphosphate + diphosphate. It functions in the pathway secondary metabolite biosynthesis. Geranylgeranyl pyrophosphate synthase; part of the gene cluster that mediates the biosynthesis of the indole diterpenes janthitremanes such as shearinine K or shearinine A. The geranylgeranyl diphosphate (GGPP) synthase janG catalyzes the first step in janthitremane biosynthesis via conversion of farnesyl pyrophosphate and isopentyl pyrophosphate into geranylgeranyl pyrophosphate (GGPP). Condensation of indole-3-glycerol phosphate with GGPP by the prenyl transferase janC then forms 3-geranylgeranylindole (3-GGI). Epoxidation by the FAD-dependent monooxygenase janM leads to a epoxidized-GGI that is substrate of the terpene cyclase janB for cyclization to yield paspaline. Paspaline is subsequently converted to 13-desoxypaspaline by the cytochrome P450 monooxygenase janP, via beta-PC-M6 in a series of alpha-face oxidations. The cytochrome P450 monooxygenase janQ is proposed to carry out sequential beta-face oxidation steps at C-7 and C-13 of 13-desoxypaspaline to form paspalicine and paspalinine respectively. The indole diterpene prenyltransferase janD may then convert paspalinine into shearinine K which is substrate of janO and/or additional enzymes for oxidation and cyclization to generate shearinine A. In Penicillium janthinellum (Penicillium vitale), this protein is Geranylgeranyl pyrophosphate synthase janG.